Reading from the N-terminus, the 396-residue chain is Microcin B17-processing protein McbD (396 aa).

A YcaO domain is found at 41-396 (ASAAGETLKS…VRESKMVPFP (356 aa)).

Its subcellular location is the cytoplasm. Its function is as follows. Necessary to process the inactive microcin B17 (McbA) precursor into the active peptide. The sequence is that of Microcin B17-processing protein McbD (mcbD) from Escherichia coli.